The primary structure comprises 498 residues: ADP,ATP carrier protein 1 (498 aa).

The Cytoplasmic portion of the chain corresponds to 1–33; it reads MSTSKSENYLSELRKIIWPIEQYENKKFLPLAF. Residues 34–54 traverse the membrane as a helical segment; the sequence is MMFCILLNYSTLRSIKDGFVV. A disulfide bond links C37 and C85. Residues 55–67 lie on the Extracellular side of the membrane; it reads TDIGTESISFLKT. The chain crosses the membrane as a helical span at residues 68–88; that stretch reads YIVLPSAVIAMIIYVKLCDIL. Over 89–92 the chain is Cytoplasmic; sequence KQEN. A helical membrane pass occupies residues 93–113; the sequence is VFYVITSFFLGYFALFAFVLY. Residues 114–147 are Extracellular-facing; it reads PYPDLVHPDHKTIESLSLAYPNFKWFIKIVGKWS. The helical transmembrane segment at 148–168 threads the bilayer; sequence FASFYTIAELWGTMMLSLLFW. Residues 169 to 184 are Cytoplasmic-facing; the sequence is QFANQITKIAEAKRFY. The helical transmembrane segment at 185–205 threads the bilayer; that stretch reads SMFGLLANLALPVTSVVIGYF. Residues 206-218 are Extracellular-facing; it reads LHEKTQIVAEHLK. The chain crosses the membrane as a helical span at residues 219–239; that stretch reads FVPLFVIMITSSFLIILTYRW. At 240–279 the chain is on the cytoplasmic side; that stretch reads MNKNVLTDPRLYDPALVKEKKTKAKLSFIESLKMIFTSKY. Residues 280-300 traverse the membrane as a helical segment; the sequence is VGYIALLIIAYGVSVNLVEGV. The Extracellular portion of the chain corresponds to 301–320; it reads WKSKVKELYPTKEAYTIYMG. A helical membrane pass occupies residues 321 to 341; that stretch reads QFQFYQGWVAIAFMLIGSNIL. The Cytoplasmic segment spans residues 342–348; it reads RKVSWLT. The chain crosses the membrane as a helical span at residues 349-369; the sequence is AAMITPLMMFITGAAFFSFIF. The Extracellular segment spans residues 370–379; it reads FDSVIAMNLT. A helical transmembrane segment spans residues 380–400; the sequence is GILASSPLTLAVMIGMIQNVL. Residues 401 to 438 are Cytoplasmic-facing; that stretch reads SKGVKYSLFDATKNMAYIPLDKDLRVKGQAAVEVIGGR. Residue 436-442 participates in ATP binding; sequence GGRLGKS. The chain crosses the membrane as a helical span at residues 439–459; that stretch reads LGKSGGAIIQSTFFILFPVFG. Over 460–465 the chain is Extracellular; sequence FIEATP. The chain crosses the membrane as a helical span at residues 466 to 486; that stretch reads YFASIFFIIVILWIFAVKGLN. The Cytoplasmic segment spans residues 487-498; sequence KEYQVLVNKNEK.

This sequence belongs to the ADP/ATP translocase tlc family.

The protein localises to the cell membrane. Its function is as follows. Provides the rickettsial cell with host ATP in exchange for rickettsial ADP. This is an obligate exchange system. This energy acquiring activity is an important component of rickettsial parasitism. In Rickettsia prowazekii (strain Madrid E), this protein is ADP,ATP carrier protein 1 (tlcA).